The following is a 105-amino-acid chain: Large ribosomal subunit protein uL24 (105 aa).

Belongs to the universal ribosomal protein uL24 family. Part of the 50S ribosomal subunit.

Its function is as follows. One of two assembly initiator proteins, it binds directly to the 5'-end of the 23S rRNA, where it nucleates assembly of the 50S subunit. In terms of biological role, one of the proteins that surrounds the polypeptide exit tunnel on the outside of the subunit. The sequence is that of Large ribosomal subunit protein uL24 from Xylella fastidiosa (strain M23).